Reading from the N-terminus, the 557-residue chain is Protein PECTIC ARABINOGALACTAN SYNTHESIS-RELATED (557 aa).

The disordered stretch occupies residues 1 to 54; that stretch reads MAELRHSSSLGSRSSSSPLRAAGDEDSSSPHVHDHSPNGGDDEDGRPRHPSRDR. Topologically, residues 1–79 are cytoplasmic; the sequence is MAELRHSSSL…DPRVSPQKNK (79 aa). Positions 7 to 20 are enriched in low complexity; the sequence is SSSLGSRSSSSPLR. The span at 45–54 shows a compositional bias: basic and acidic residues; it reads GRPRHPSRDR. Residues 80–100 form a helical; Signal-anchor for type II membrane protein membrane-spanning segment; sequence ISLLLILILAIASLISVYGII. At 101 to 557 the chain is on the lumenal side; sequence NHLNAPYLCK…NPLTPCMCKA (457 aa). N-linked (GlcNAc...) asparagine glycosylation is found at N156, N188, and N324. 336-338 contributes to the substrate binding site; the sequence is HLR. A glycan (N-linked (GlcNAc...) asparagine) is linked at N375.

Belongs to the glycosyltransferase GT106 family. As to expression, widely expressed with the highest expression in reproductive tissues and roots.

The protein resides in the golgi apparatus membrane. The protein operates within glycan metabolism; pectin biosynthesis. Functionally, glycosyltransferase involved in the biosynthesis of pectic type-II arabinogalactans. This chain is Protein PECTIC ARABINOGALACTAN SYNTHESIS-RELATED, found in Arabidopsis thaliana (Mouse-ear cress).